The chain runs to 362 residues: 3-dehydroquinate synthase (362 aa).

NAD(+) contacts are provided by residues 71–76, 105–109, 129–130, K142, K151, and 169–172; these read DGEQYK, GVVGD, TT, and CLKT. Residues E184, H247, and H264 each contribute to the Zn(2+) site.

It belongs to the sugar phosphate cyclases superfamily. Dehydroquinate synthase family. Requires Co(2+) as cofactor. Zn(2+) serves as cofactor. The cofactor is NAD(+).

Its subcellular location is the cytoplasm. The enzyme catalyses 7-phospho-2-dehydro-3-deoxy-D-arabino-heptonate = 3-dehydroquinate + phosphate. Its pathway is metabolic intermediate biosynthesis; chorismate biosynthesis; chorismate from D-erythrose 4-phosphate and phosphoenolpyruvate: step 2/7. Functionally, catalyzes the conversion of 3-deoxy-D-arabino-heptulosonate 7-phosphate (DAHP) to dehydroquinate (DHQ). The protein is 3-dehydroquinate synthase of Shigella dysenteriae serotype 1 (strain Sd197).